Reading from the N-terminus, the 407-residue chain is MIPNPLEELTLEQLRSQRTSMKWRAHPADVLPLWVAEMDVKLPPTVADALRRAIDDGDTGYPYGTEYAEAVREFACQRWQWHDLEVSRTAIVPDVMLGIVEVLRLITDRGDPVIVNSPVYAPFYAFVSHDGRRVIPAPLRGDGRIDLDALQEAFSSARASSGSSGNVAYLLCNPHNPTGSVHTADELRGIAERAQRFGVRVVSDEIHAPLIPSGARFTPYLSVPGAENAFALMSASKAWNLGGLKAALAIAGREAAADLARMPEEVGHGPSHLGVIAHTAAFRTGGNWLDALLRGLDHNRTLLGALVDEHLPGVQYRWPQGTYLAWLDCRELGFDDAASDEMTEGLAVVSDLSGPARWFLDHARVALSSGHVFGIGGAGHVRINFATSRAILIEAVSRMSRSLLERR.

Lys-237 is subject to N6-(pyridoxal phosphate)lysine.

Belongs to the class-II pyridoxal-phosphate-dependent aminotransferase family. MalY/PatB cystathionine beta-lyase subfamily. Pyridoxal 5'-phosphate is required as a cofactor.

The catalysed reaction is L,L-cystathionine + H2O = L-homocysteine + pyruvate + NH4(+). The enzyme catalyses an S-substituted L-cysteine + H2O = a thiol + pyruvate + NH4(+). The protein operates within amino-acid biosynthesis; L-methionine biosynthesis via de novo pathway; L-homocysteine from L-cystathionine: step 1/1. The protein is Putative cystathionine beta-lyase of Mycobacterium tuberculosis (strain CDC 1551 / Oshkosh).